Reading from the N-terminus, the 264-residue chain is Pyridoxine 5'-phosphate synthase (264 aa).

The segment covering 1–21 (MTDTAQILPTTLEQNPQNTSK) has biased composition (polar residues). The interval 1 to 22 (MTDTAQILPTTLEQNPQNTSKK) is disordered. Residue Asn28 coordinates 3-amino-2-oxopropyl phosphate. 1-deoxy-D-xylulose 5-phosphate is bound at residue 30-31 (DH). Arg39 contributes to the 3-amino-2-oxopropyl phosphate binding site. His64 (proton acceptor) is an active-site residue. 1-deoxy-D-xylulose 5-phosphate is bound by residues Arg66 and His71. Glu91 (proton acceptor) is an active-site residue. Thr121 contributes to the 1-deoxy-D-xylulose 5-phosphate binding site. The active-site Proton donor is His217. Residues Gly218 and 239 to 240 (GH) contribute to the 3-amino-2-oxopropyl phosphate site.

It belongs to the PNP synthase family. As to quaternary structure, homooctamer; tetramer of dimers.

Its subcellular location is the cytoplasm. The catalysed reaction is 3-amino-2-oxopropyl phosphate + 1-deoxy-D-xylulose 5-phosphate = pyridoxine 5'-phosphate + phosphate + 2 H2O + H(+). Its pathway is cofactor biosynthesis; pyridoxine 5'-phosphate biosynthesis; pyridoxine 5'-phosphate from D-erythrose 4-phosphate: step 5/5. Functionally, catalyzes the complicated ring closure reaction between the two acyclic compounds 1-deoxy-D-xylulose-5-phosphate (DXP) and 3-amino-2-oxopropyl phosphate (1-amino-acetone-3-phosphate or AAP) to form pyridoxine 5'-phosphate (PNP) and inorganic phosphate. In Psychrobacter cryohalolentis (strain ATCC BAA-1226 / DSM 17306 / VKM B-2378 / K5), this protein is Pyridoxine 5'-phosphate synthase.